A 435-amino-acid chain; its full sequence is Eukaryotic translation initiation factor 3 subunit E (435 aa).

Residues 219–392 enclose the PCI domain; sequence FFNHAKGRDL…GHVVMGTQPL (174 aa).

Belongs to the eIF-3 subunit E family. As to quaternary structure, component of the eukaryotic translation initiation factor 3 (eIF-3) complex.

The protein resides in the cytoplasm. Functionally, component of the eukaryotic translation initiation factor 3 (eIF-3) complex, which is involved in protein synthesis of a specialized repertoire of mRNAs and, together with other initiation factors, stimulates binding of mRNA and methionyl-tRNAi to the 40S ribosome. The eIF-3 complex specifically targets and initiates translation of a subset of mRNAs involved in cell proliferation. The protein is Eukaryotic translation initiation factor 3 subunit E (eIF3-S6) of Aedes aegypti (Yellowfever mosquito).